The sequence spans 161 residues: MQLSALIEKTVVGMGYELVNFEQAARGLVRVFIDFTPEDADKGAITVEDCEKVTHQLLHVLTVENANYERLEVSSPGLDRPLKKLSDYVRFAGAEALVKLRMPMPNAANRKSFQGILQEPVGETLALEFEGNDGPAKLEFTLADVDKAHLVPQVNFRSRKA.

It belongs to the RimP family.

It is found in the cytoplasm. Functionally, required for maturation of 30S ribosomal subunits. The protein is Ribosome maturation factor RimP of Janthinobacterium sp. (strain Marseille) (Minibacterium massiliensis).